The sequence spans 464 residues: 3-isopropylmalate dehydratase large subunit (464 aa).

Residues C337, C397, and C400 each coordinate [4Fe-4S] cluster.

The protein belongs to the aconitase/IPM isomerase family. LeuC type 1 subfamily. As to quaternary structure, heterodimer of LeuC and LeuD. [4Fe-4S] cluster serves as cofactor.

The enzyme catalyses (2R,3S)-3-isopropylmalate = (2S)-2-isopropylmalate. The protein operates within amino-acid biosynthesis; L-leucine biosynthesis; L-leucine from 3-methyl-2-oxobutanoate: step 2/4. In terms of biological role, catalyzes the isomerization between 2-isopropylmalate and 3-isopropylmalate, via the formation of 2-isopropylmaleate. In Bacillus cereus (strain ZK / E33L), this protein is 3-isopropylmalate dehydratase large subunit.